The following is a 304-amino-acid chain: Transcription factor bHLH94 (304 aa).

Positions 86-107 (VESHPPPQHRRKRRRTRNCKNK) are disordered. Residues 92–104 (PQHRRKRRRTRNC) show a composition bias toward basic residues. Residues 112–163 (NQRMTHIAVERNRRKQMNEYLAVLRSLMPSSYAQRGDQASIVGGAINYVKEL) enclose the bHLH domain.

As to quaternary structure, homodimer. In terms of tissue distribution, expressed constitutively in roots, leaves, stems, and flowers.

The protein localises to the nucleus. In Arabidopsis thaliana (Mouse-ear cress), this protein is Transcription factor bHLH94 (BHLH94).